We begin with the raw amino-acid sequence, 286 residues long: ATP phosphoribosyltransferase (286 aa).

It belongs to the ATP phosphoribosyltransferase family. Long subfamily. Mg(2+) is required as a cofactor.

The protein localises to the cytoplasm. It catalyses the reaction 1-(5-phospho-beta-D-ribosyl)-ATP + diphosphate = 5-phospho-alpha-D-ribose 1-diphosphate + ATP. It functions in the pathway amino-acid biosynthesis; L-histidine biosynthesis; L-histidine from 5-phospho-alpha-D-ribose 1-diphosphate: step 1/9. Feedback inhibited by histidine. Its function is as follows. Catalyzes the condensation of ATP and 5-phosphoribose 1-diphosphate to form N'-(5'-phosphoribosyl)-ATP (PR-ATP). Has a crucial role in the pathway because the rate of histidine biosynthesis seems to be controlled primarily by regulation of HisG enzymatic activity. The sequence is that of ATP phosphoribosyltransferase from Cytophaga hutchinsonii (strain ATCC 33406 / DSM 1761 / CIP 103989 / NBRC 15051 / NCIMB 9469 / D465).